Here is a 73-residue protein sequence, read N- to C-terminus: Bacterioferritin-associated ferredoxin (73 aa).

Positions 4 and 6 each coordinate [2Fe-2S] cluster. Phosphate is bound by residues Arg26 and Arg29. Cys38 and Cys41 together coordinate [2Fe-2S] cluster. Phosphate is bound at residue Lys46.

Belongs to the Bfd family. Monomer. Interacts with BfrB; up to 12 Bfd proteins can bind to the BfrB bacterioferritin complex (BFR). One Bfd protein binds to a BfrB dimer in the BFR, with the [2Fe-2S] cluster positioned about 22 Angstroms above the heme of BfrB. Does not interact with FtnA. [2Fe-2S] cluster is required as a cofactor. The cofactor is phosphate.

Functionally, required for mobilization of iron from the bacterioferritin (BFR) complex, composed of BfrB and FtnA in varying proportions; mobilization requires the [2Fe-2S] cluster of this protein. Reduction of the BfrB heme group occurs in the presence of Bfd, strongly suggesting that the BfrB-Bfd complex allows heme to mediate electron transfer from FPR to the Fe(3+) iron core in the BFR prior to its release as Fe(2+). This chain is Bacterioferritin-associated ferredoxin, found in Pseudomonas aeruginosa (strain ATCC 15692 / DSM 22644 / CIP 104116 / JCM 14847 / LMG 12228 / 1C / PRS 101 / PAO1).